The following is a 223-amino-acid chain: 7-carboxy-7-deazaguanine synthase (223 aa).

Substrate-binding positions include Leu-12–Gly-14 and Arg-27. The Radical SAM core domain maps to Phe-18–Ala-223. 3 residues coordinate [4Fe-4S] cluster: Cys-31, Cys-35, and Cys-38. Thr-40 is a binding site for Mg(2+). Thr-92 lines the substrate pocket. Residues Gly-94 and Ser-136–Lys-138 contribute to the S-adenosyl-L-methionine site.

It belongs to the radical SAM superfamily. 7-carboxy-7-deazaguanine synthase family. As to quaternary structure, homodimer. The cofactor is [4Fe-4S] cluster. S-adenosyl-L-methionine is required as a cofactor. Mg(2+) serves as cofactor.

The enzyme catalyses 6-carboxy-5,6,7,8-tetrahydropterin + H(+) = 7-carboxy-7-deazaguanine + NH4(+). Its pathway is purine metabolism; 7-cyano-7-deazaguanine biosynthesis. Functionally, catalyzes the complex heterocyclic radical-mediated conversion of 6-carboxy-5,6,7,8-tetrahydropterin (CPH4) to 7-carboxy-7-deazaguanine (CDG), a step common to the biosynthetic pathways of all 7-deazapurine-containing compounds. In Escherichia coli (strain K12), this protein is 7-carboxy-7-deazaguanine synthase.